The primary structure comprises 119 residues: ATP-dependent Clp protease adapter protein ClpS (119 aa).

The tract at residues 1–24 (MGPESPDSIPPHGPGNGDGDQDLD) is disordered.

The protein belongs to the ClpS family. Binds to the N-terminal domain of the chaperone ClpA.

Involved in the modulation of the specificity of the ClpAP-mediated ATP-dependent protein degradation. This Gluconobacter oxydans (strain 621H) (Gluconobacter suboxydans) protein is ATP-dependent Clp protease adapter protein ClpS.